The primary structure comprises 740 residues: Probable type IV piliation system protein DR_0774 (740 aa).

Positions 1–20 (MNKRHALLLTAVLGMATAYA) are cleaved as a signal peptide.

It belongs to the bacterial secretin family.

Its subcellular location is the cell envelope. Functionally, could be part of the type IV piliation system (T4P). May contribute at the cohesion between the S-layer and the outer membrane by forming oligomers. Could also be the main channel through which trafficking is managed. In Deinococcus radiodurans (strain ATCC 13939 / DSM 20539 / JCM 16871 / CCUG 27074 / LMG 4051 / NBRC 15346 / NCIMB 9279 / VKM B-1422 / R1), this protein is Probable type IV piliation system protein DR_0774.